Consider the following 867-residue polypeptide: Coiled-coil domain-containing protein 178 (867 aa).

Coiled coils occupy residues 153 to 204, 233 to 414, 445 to 470, and 662 to 696; these read DEKC…KIDS, WHLE…ENQY, ACTKLTEDNKKLEIDINKITVKTNES, and MIFYAKINELNEELKAKEEEKKSFDQTLEILKNKF.

The polypeptide is Coiled-coil domain-containing protein 178 (CCDC178) (Homo sapiens (Human)).